A 311-amino-acid chain; its full sequence is tRNA-cytidine(32) 2-sulfurtransferase (311 aa).

The short motif at 47 to 52 is the PP-loop motif element; sequence SGGKDS. Residues Cys-122, Cys-125, and Cys-213 each coordinate [4Fe-4S] cluster.

This sequence belongs to the TtcA family. In terms of assembly, homodimer. Mg(2+) is required as a cofactor. It depends on [4Fe-4S] cluster as a cofactor.

It is found in the cytoplasm. It catalyses the reaction cytidine(32) in tRNA + S-sulfanyl-L-cysteinyl-[cysteine desulfurase] + AH2 + ATP = 2-thiocytidine(32) in tRNA + L-cysteinyl-[cysteine desulfurase] + A + AMP + diphosphate + H(+). It functions in the pathway tRNA modification. In terms of biological role, catalyzes the ATP-dependent 2-thiolation of cytidine in position 32 of tRNA, to form 2-thiocytidine (s(2)C32). The sulfur atoms are provided by the cysteine/cysteine desulfurase (IscS) system. This Salmonella paratyphi B (strain ATCC BAA-1250 / SPB7) protein is tRNA-cytidine(32) 2-sulfurtransferase.